The following is a 116-amino-acid chain: NADH-ubiquinone oxidoreductase chain 3 (116 aa).

3 consecutive transmembrane segments (helical) span residues 4 to 24, 56 to 76, and 88 to 108; these read LIIT…IAFW, FFLI…LLPL, and TLIL…YEWI.

It belongs to the complex I subunit 3 family. In terms of assembly, core subunit of respiratory chain NADH dehydrogenase (Complex I) which is composed of 45 different subunits. Interacts with TMEM186. Interacts with TMEM242.

The protein localises to the mitochondrion inner membrane. The catalysed reaction is a ubiquinone + NADH + 5 H(+)(in) = a ubiquinol + NAD(+) + 4 H(+)(out). Its function is as follows. Core subunit of the mitochondrial membrane respiratory chain NADH dehydrogenase (Complex I) which catalyzes electron transfer from NADH through the respiratory chain, using ubiquinone as an electron acceptor. Essential for the catalytic activity of complex I. The polypeptide is NADH-ubiquinone oxidoreductase chain 3 (Osphranter robustus (Wallaroo)).